Consider the following 444-residue polypeptide: Tubulin beta chain (444 aa).

GTP is bound by residues Gln-11, Glu-69, Ser-138, Gly-142, Thr-143, Gly-144, Asn-204, and Asn-226. Position 69 (Glu-69) interacts with Mg(2+).

This sequence belongs to the tubulin family. In terms of assembly, dimer of alpha and beta chains. A typical microtubule is a hollow water-filled tube with an outer diameter of 25 nm and an inner diameter of 15 nM. Alpha-beta heterodimers associate head-to-tail to form protofilaments running lengthwise along the microtubule wall with the beta-tubulin subunit facing the microtubule plus end conferring a structural polarity. Microtubules usually have 13 protofilaments but different protofilament numbers can be found in some organisms and specialized cells. Mg(2+) serves as cofactor.

It is found in the cytoplasm. The protein resides in the cytoskeleton. In terms of biological role, tubulin is the major constituent of microtubules, a cylinder consisting of laterally associated linear protofilaments composed of alpha- and beta-tubulin heterodimers. Microtubules grow by the addition of GTP-tubulin dimers to the microtubule end, where a stabilizing cap forms. Below the cap, tubulin dimers are in GDP-bound state, owing to GTPase activity of alpha-tubulin. The protein is Tubulin beta chain of Trichuris trichiura (Whipworm).